The following is a 427-amino-acid chain: Enolase (427 aa).

Glutamine 163 is a (2R)-2-phosphoglycerate binding site. Residue glutamate 205 is the Proton donor of the active site. Mg(2+)-binding residues include aspartate 242, glutamate 285, and aspartate 312. Residues lysine 337, arginine 366, serine 367, and lysine 388 each coordinate (2R)-2-phosphoglycerate. Lysine 337 acts as the Proton acceptor in catalysis.

This sequence belongs to the enolase family. Requires Mg(2+) as cofactor.

Its subcellular location is the cytoplasm. The protein localises to the secreted. The protein resides in the cell surface. It catalyses the reaction (2R)-2-phosphoglycerate = phosphoenolpyruvate + H2O. It functions in the pathway carbohydrate degradation; glycolysis; pyruvate from D-glyceraldehyde 3-phosphate: step 4/5. Functionally, catalyzes the reversible conversion of 2-phosphoglycerate (2-PG) into phosphoenolpyruvate (PEP). It is essential for the degradation of carbohydrates via glycolysis. This is Enolase from Azorhizobium caulinodans (strain ATCC 43989 / DSM 5975 / JCM 20966 / LMG 6465 / NBRC 14845 / NCIMB 13405 / ORS 571).